Here is a 565-residue protein sequence, read N- to C-terminus: MEPKTKKQRSLYIPYAGPVLLEFPLLNKGSAFSMEERRNFNLLGLLPEVVETIEEQAERAWIQYQGFKTEIDKHIYLRNIQDTNETLFYRLVNNHLDEMMPVIYTPTVGAACERFSEIYRRSRGVFISYQNRHNMDDILQNVPNHNIKVIVVTDGERILGLGDQGIGGMGIPIGKLSLYTACGGISPAYTLPVVLDVGTNNQQLLNDPLYMGWRNPRITDDEYYEFVDEFIQAVKQRWPDVLLQFEDFAQKNAMPLLNRYRNEICSFNDDIQGTAAVTVGTLIAASRAAGGQLSEKKIVFLGAGSAGCGIAEMIISQTQREGLSEEAARQKVFMVDRFGLLTDKMPNLLPFQTKLVQKRENLSDWDTDSDVLSLLDVVRNVKPDILIGVSGQTGLFTEEIIREMHKHCPRPIVMPLSNPTSRVEATPQDIIAWTEGNALVATGSPFNPVVWKDKIYPIAQCNNAFIFPGIGLGVIASGASRITDEMLMSASETLAQYSPLVLNGEGLVLPELKDIQKVSRAIAFAVGKMAQQQGVAVKTSAEALQQAIDDNFWQAEYRDYRRTSI.

Tyr104 acts as the Proton donor in catalysis. NAD(+) is bound at residue Arg157. The Proton acceptor role is filled by Lys175. The a divalent metal cation site is built by Glu246, Asp247, and Asp270. NAD(+)-binding residues include Asp270 and Asn418.

Belongs to the malic enzymes family. Homotetramer. Requires Mg(2+) as cofactor. The cofactor is Mn(2+).

The enzyme catalyses (S)-malate + NAD(+) = pyruvate + CO2 + NADH. It catalyses the reaction oxaloacetate + H(+) = pyruvate + CO2. The sequence is that of NAD-dependent malic enzyme from Escherichia coli O139:H28 (strain E24377A / ETEC).